A 555-amino-acid polypeptide reads, in one-letter code: Hdr-like menaquinol oxidoreductase iron-sulfur subunit 2 (555 aa).

4Fe-4S ferredoxin-type domains are found at residues 82–111 (RSFK…GDPK) and 151–180 (KELY…AEIV). The [4Fe-4S] cluster site is built by cysteine 91, cysteine 94, cysteine 97, cysteine 101, cysteine 160, cysteine 163, cysteine 166, and cysteine 170.

Consists of five subunits: an integral membrane subunit, a cytochrome b-like subunit, a cytochrome c subunit and two iron-sulfur subunits. [4Fe-4S] cluster serves as cofactor.

Its subcellular location is the cell membrane. Functionally, has menaquinol-oxidizing activity. HmeC and HmeD subunits may together mediate electron transfer from menaquinol to an unidentified electron acceptor on the cytoplasmic side of the membrane. This is Hdr-like menaquinol oxidoreductase iron-sulfur subunit 2 (hmeD) from Archaeoglobus fulgidus (strain ATCC 49558 / DSM 4304 / JCM 9628 / NBRC 100126 / VC-16).